The following is a 301-amino-acid chain: Possible hemolysin C (301 aa).

2 CBS domains span residues 80–142 and 145–202; these read MVPR…NGRL and LIRK…IDDE.

This sequence belongs to the UPF0053 family. Hemolysin C subfamily.

This Rickettsia akari (strain Hartford) protein is Possible hemolysin C (tlyC).